Here is a 196-residue protein sequence, read N- to C-terminus: Fucoxanthin-chlorophyll a-c binding protein A, chloroplastic (196 aa).

The N-terminal 31 residues, 1–31, are a transit peptide targeting the chloroplast; sequence MKFAVFASLLASRAAFAPAQQSARTSVATNM. The next 3 membrane-spanning stretches (helical) occupy residues 73-94, 114-134, and 174-196; these read ICMLAVAGYLTQEAGIRLPGDI, VPGAGIAQIIAFIGFFEIAVM, and GRAAQMGILALMVHEQLGVSILP.

This sequence belongs to the fucoxanthin chlorophyll protein family. As to quaternary structure, the LHC complex of chromophytic algae is composed of fucoxanthin, chlorophyll A and C bound non-covalently by fucoxanthin chlorophyll proteins (FCPs). The ratio of the pigments in LHC; fucoxanthin: chlorophyll C: chlorophyll A; (0.6-1): (0.1-0.3): (1).

Its subcellular location is the plastid. It localises to the chloroplast thylakoid membrane. Its function is as follows. The light-harvesting complex (LHC) functions as a light receptor, it captures and delivers excitation energy to photosystems with which it is closely associated. Energy is transferred from the carotenoid and chlorophyll C (or B) to chlorophyll A and the photosynthetic reaction centers where it is used to synthesize ATP and reducing power. This is Fucoxanthin-chlorophyll a-c binding protein A, chloroplastic (FCPA) from Phaeodactylum tricornutum (Diatom).